Here is a 40-residue protein sequence, read N- to C-terminus: Ferredoxin-2 (40 aa).

Residues 3-40 enclose the 2Fe-2S ferredoxin-type domain; that stretch reads YNIKLITPEGTKEITCSDSEYILDAAEEKGLDLPYSCR. [2Fe-2S] cluster is bound at residue Cys39.

Belongs to the 2Fe2S plant-type ferredoxin family. Requires [2Fe-2S] cluster as cofactor.

It is found in the plastid. The protein resides in the chloroplast. Functionally, ferredoxins are iron-sulfur proteins that transfer electrons in a wide variety of metabolic reactions. The chain is Ferredoxin-2 from Pisum sativum (Garden pea).